The sequence spans 628 residues: Hepatocyte nuclear factor 1-alpha (628 aa).

Positions 1–31 (MVSKLSQLQTELLAALLESGLSKEALIQALG) are dimerization. The region spanning 1–32 (MVSKLSQLQTELLAALLESGLSKEALIQALGE) is the HNF-p1 domain. Residues 47 to 79 (GESCGGTRGDLTELPNGLGETRGSEDDTDDDGE) form a disordered region. Serine 70 carries the post-translational modification Phosphoserine. Threonine 74 carries the post-translational modification Phosphothreonine. The POU-specific atypical domain occupies 87–182 (KELENLSPEE…VAQQFTHAGQ (96 aa)). Serine 93 bears the Phosphoserine mark. Lysine 117 participates in a covalent cross-link: Glycyl lysine isopeptide (Lys-Gly) (interchain with G-Cter in ubiquitin). Interaction with DNA regions lie at residues 130–132 (QRE), 143–149 (HLSQHLN), 155–158 (KTQK), and 203–206 (RFKW). Residues 183-205 (GGLIEEPTGDELPTKKGRRNRFK) are disordered. A Nuclear localization signal motif is present at residues 197-205 (KKGRRNRFK). A DNA-binding region (homeobox; HNF1-type) is located at residues 199 to 279 (GRRNRFKWGP…NRRKEEAFRH (81 aa)). Serine 247 is modified (phosphoserine). 2 interaction with DNA regions span residues 263–265 (RVY) and 270–273 (NRRK). Disordered stretches follow at residues 284 to 338 (DTYN…SSSG) and 541 to 585 (FTSD…LSTS). Over residues 288–298 (GPPPGPGPGPA) the composition is skewed to pro residues. Serine 313 carries the phosphoserine modification. Polar residues-rich tracts occupy residues 324–338 (QSATSEAAEVPSSSG) and 558–575 (SPATTIHIPSQDPSNIQH).

The protein belongs to the HNF1 homeobox family. As to quaternary structure, binds DNA as a dimer. Heterotetramer with PCBD1; formed by a dimer of dimers. Interacts with PCBD1. Interacts with BHLHE41. Interacts with NR5A2. Interacts with SPOP; this interaction promotes ubiquitination and degradation of HNF1A. In terms of processing, ubiquitinated in s SPOP-dependent manner; leading to prteasomal degradation. Liver.

The protein resides in the nucleus. Its function is as follows. Transcriptional activator that regulates the tissue specific expression of multiple genes, especially in pancreatic islet cells and in liver. Binds to the inverted palindrome 5'-GTTAATNATTAAC-3'. Activates the transcription of CYP1A2, CYP2E1 and CYP3A11. This is Hepatocyte nuclear factor 1-alpha (Hnf1a) from Rattus norvegicus (Rat).